The sequence spans 1938 residues: Myosin-6 (1938 aa).

The Myosin N-terminal SH3-like domain maps to Asp32 to Pro81. One can recognise a Myosin motor domain in the interval Asp85–Asp780. An N6,N6,N6-trimethyllysine modification is found at Lys129. Residue Gly178 to Thr185 participates in ATP binding. At Thr379 the chain carries Phosphothreonine. Ser417 carries the post-translational modification Phosphoserine. Actin-binding stretches follow at residues Leu657–Glu679 and Lys759–Gly773. Residues Leu783 to Ala812 enclose the IQ domain. Calmodulin-binding regions lie at residues Ile790–Val807 and Ile816–Lys833. Residues Leu842–Glu1938 are a coiled coil. Phosphoserine is present on residues Ser1090 and Ser1139. Residue Tyr1261 is modified to Phosphotyrosine. A Phosphoserine modification is found at Ser1271. Phosphothreonine occurs at positions 1277 and 1284. Position 1309 is a phosphoserine (Ser1309). Tyr1310 carries the phosphotyrosine modification. Thr1311 bears the Phosphothreonine mark. Ser1512 is subject to Phosphoserine. Thr1515 bears the Phosphothreonine mark. The interval Glu1909–Glu1938 is disordered. Residues Lys1925–Glu1938 are compositionally biased toward basic and acidic residues.

It belongs to the TRAFAC class myosin-kinesin ATPase superfamily. Myosin family. Muscle myosin is a hexameric protein that consists of 2 heavy chain subunits (MHC), 2 alkali light chain subunits (MLC) and 2 regulatory light chain subunits (MLC-2).

It localises to the cytoplasm. Its subcellular location is the myofibril. Functionally, muscle contraction. This chain is Myosin-6 (Myh6), found in Mus musculus (Mouse).